The primary structure comprises 288 residues: ATP synthase gamma chain (288 aa).

It belongs to the ATPase gamma chain family. F-type ATPases have 2 components, CF(1) - the catalytic core - and CF(0) - the membrane proton channel. CF(1) has five subunits: alpha(3), beta(3), gamma(1), delta(1), epsilon(1). CF(0) has three main subunits: a, b and c.

Its subcellular location is the cell membrane. Its function is as follows. Produces ATP from ADP in the presence of a proton gradient across the membrane. The gamma chain is believed to be important in regulating ATPase activity and the flow of protons through the CF(0) complex. The polypeptide is ATP synthase gamma chain (Bacillus pumilus (strain SAFR-032)).